A 435-amino-acid chain; its full sequence is Methylenetetrahydrofolate--tRNA-(uracil-5-)-methyltransferase TrmFO (435 aa).

An FAD-binding site is contributed by 7-12 (GAGLAG).

The protein belongs to the MnmG family. TrmFO subfamily. FAD is required as a cofactor.

The protein resides in the cytoplasm. The enzyme catalyses uridine(54) in tRNA + (6R)-5,10-methylene-5,6,7,8-tetrahydrofolate + NADH + H(+) = 5-methyluridine(54) in tRNA + (6S)-5,6,7,8-tetrahydrofolate + NAD(+). It carries out the reaction uridine(54) in tRNA + (6R)-5,10-methylene-5,6,7,8-tetrahydrofolate + NADPH + H(+) = 5-methyluridine(54) in tRNA + (6S)-5,6,7,8-tetrahydrofolate + NADP(+). In terms of biological role, catalyzes the folate-dependent formation of 5-methyl-uridine at position 54 (M-5-U54) in all tRNAs. The chain is Methylenetetrahydrofolate--tRNA-(uracil-5-)-methyltransferase TrmFO from Thermotoga maritima (strain ATCC 43589 / DSM 3109 / JCM 10099 / NBRC 100826 / MSB8).